The chain runs to 513 residues: ATP synthase subunit alpha (513 aa).

169-176 contacts ATP; the sequence is GDRQIGKT.

The protein belongs to the ATPase alpha/beta chains family. In terms of assembly, F-type ATPases have 2 components, CF(1) - the catalytic core - and CF(0) - the membrane proton channel. CF(1) has five subunits: alpha(3), beta(3), gamma(1), delta(1), epsilon(1). CF(0) has three main subunits: a(1), b(2) and c(9-12). The alpha and beta chains form an alternating ring which encloses part of the gamma chain. CF(1) is attached to CF(0) by a central stalk formed by the gamma and epsilon chains, while a peripheral stalk is formed by the delta and b chains.

It localises to the cell inner membrane. It carries out the reaction ATP + H2O + 4 H(+)(in) = ADP + phosphate + 5 H(+)(out). In terms of biological role, produces ATP from ADP in the presence of a proton gradient across the membrane. The alpha chain is a regulatory subunit. This Francisella tularensis subsp. holarctica (strain OSU18) protein is ATP synthase subunit alpha.